Here is a 618-residue protein sequence, read N- to C-terminus: Polyamine transporter TPO5 (618 aa).

At 1–60 (MPEYTLLADNIRENIVHFDPNGLFDNLHTIVHEDDSQENEEAEHFNYDQVLDKSLLSRGS) the chain is on the cytoplasmic side. Residues 61-84 (IVGLGLGLMSPVLGMCTSMAIGLI) form a helical membrane-spanning segment. Residues 85–90 (NGGPLT) lie on the Extracellular side of the membrane. The helical transmembrane segment at 91–110 (IMLGFLISGVCIWFSSLSLG) threads the bilayer. Over 111 to 131 (EIVSKFPMELHVGSAMLAPEK) the chain is Cytoplasmic. The helical transmembrane segment at 132 to 148 (LKLVCSWYTGWLMLIGN) threads the bilayer. Topologically, residues 149–154 (WTMSTS) are extracellular. The helical transmembrane segment at 155–171 (ITFAGAQLTISLILMTN) threads the bilayer. Topologically, residues 172-179 (SNLISEAH) are cytoplasmic. Residues 180-200 (LIFYTVIVFYLVVTVVGLVNL) traverse the membrane as a helical segment. The Extracellular segment spans residues 201–211 (KFARFIETINK). Residues 212–231 (VCVYWIIYAIIFIDILLLVF) form a helical membrane-spanning segment. Residues 232 to 297 (HKGKFRSLKY…EKDIPRGMSN (66 aa)) are Cytoplasmic-facing. The chain crosses the membrane as a helical span at residues 298–317 (AVLLSAFSGVIFLIPIMLIL). The Extracellular portion of the chain corresponds to 318–342 (PDNDLLFTNHKVLPIVNIFTKSTDS). Residues 343–367 (VVLSFFLVLLILGNLLFSGIGSITT) traverse the membrane as a helical segment. At 368 to 402 (SSRAVYSFSRDQAIPYYDKWTYVEPDSQSKVPKNS) the chain is on the cytoplasmic side. Residues 403–419 (VVLSMIISYFLGLLALI) form a helical membrane-spanning segment. Residues 420–425 (STAAFN) are Extracellular-facing. A helical membrane pass occupies residues 426 to 449 (AFIGAAVLCLCSATFIPLVLVLFT). Topologically, residues 450–464 (RRRAIRSAPVKIRYK) are cytoplasmic. Residues 465-486 (FGWFINIVSIVWLLLSMVSVCL) form a helical membrane-spanning segment. The Extracellular segment spans residues 487-498 (PTQVPVTFKTMN). The helical transmembrane segment at 499–516 (YALMVYVFCILVITGLYF) threads the bilayer. Over 517–618 (KWGKYNFRLP…DLADDRRYDI (102 aa)) the chain is Cytoplasmic. Ser569 carries the post-translational modification Phosphoserine. The interval 576–618 (VHPKSSTENPFEENEENVITDYGDEHHTAEQEFDLADDRRYDI) is disordered. Basic and acidic residues predominate over residues 598–618 (GDEHHTAEQEFDLADDRRYDI).

It belongs to the amino acid-polyamine-organocation (APC) superfamily.

It is found in the golgi apparatus membrane. Functionally, required for polyamine transport. Transports putrescine effectively and spermidine less effectively. This is Polyamine transporter TPO5 (TPO5) from Saccharomyces cerevisiae (strain ATCC 204508 / S288c) (Baker's yeast).